Here is a 396-residue protein sequence, read N- to C-terminus: Ribosomal RNA large subunit methyltransferase I (396 aa).

The 80-residue stretch at 2–81 (SVRLVLAKGR…ESIDIAFFTR (80 aa)) folds into the PUA domain.

Belongs to the methyltransferase superfamily. RlmI family.

Its subcellular location is the cytoplasm. It catalyses the reaction cytidine(1962) in 23S rRNA + S-adenosyl-L-methionine = 5-methylcytidine(1962) in 23S rRNA + S-adenosyl-L-homocysteine + H(+). Specifically methylates the cytosine at position 1962 (m5C1962) of 23S rRNA. The sequence is that of Ribosomal RNA large subunit methyltransferase I from Escherichia coli O127:H6 (strain E2348/69 / EPEC).